The primary structure comprises 225 residues: MCTSLTTCEWKKVFYEKMEVAKPADSWELIIDPNLKPSELAPGWKQYLEQHASGRFHCSWCWHTWQSAHVVILFHMFLDRAQRAGSVRMRVFKQLCYECGTARLDESSMLEENIEGLVDNLITSLREQCYEEDGGQYRIHVASRPDSGPHRAEFCEACQEGIVHWKPSEKLLEEEVTTYTSEASKPRAQAGSGYNFLSLRWCLFWASLCLLVVYLQFSFLSPAFF.

Over 1 to 196 (MCTSLTTCEW…RAQAGSGYNF (196 aa)) the chain is Cytoplasmic. The 3CxxC-type zinc-finger motif lies at 52–161 (ASGRFHCSWC…AEFCEACQEG (110 aa)). Residues 197-219 (LSLRWCLFWASLCLLVVYLQFSF) traverse the membrane as a helical segment. The Extracellular portion of the chain corresponds to 220 to 225 (LSPAFF).

The protein belongs to the TMEM7 family. As to quaternary structure, interacts with olfactory receptors. In terms of tissue distribution, expressed in circumvallate papillae and testis.

The protein resides in the cell membrane. Its function is as follows. Specifically promotes functional cell surface expression of olfactory receptors, but not of other GPCRs. This chain is Receptor-transporting protein 2 (RTP2), found in Homo sapiens (Human).